Consider the following 802-residue polypeptide: MRAVLSQKTTPLPRYLWPGHLSGPRRLTWSWCSDHRTPTCRELGSPHPTPCTGPARGWPRRGGGPCGFTSAGHVLCGYPLCLLSGPIQGCGTGLGDSSMAFLSRTSPVAAASFQSRQEARGSILLQSCQLPPQWLSTEAWTGEWKQPHGGALTSRSPGPVAPQRPCHLKGWQHRPTQHNAACKQGQAAAQTPPRPGPPSAPPPPPKEGHQEGLVELPASFRELLTFFCTNATIHGAIRLVCSRGNRLKTTSWGLLSLGALVALCWQLGLLFERHWHRPVLMAVSVHSERKLLPLVTLCDGNPRRPSPVLRHLELLDEFARENIDSLYNVNLSKGRAALSATVPRHEPPFHLDREIRLQRLSHSGSRVRVGFRLCNSTGGDCFYRGYTSGVAAVQDWYHFHYVDILALLPAAWEDSHGSQDGHFVLSCSYDGLDCQARQFRTFHHPTYGSCYTVDGVWTAQRPGITHGVGLVLRVEQQPHLPLLSTLAGIRVMVHGRNHTPFLGHHSFSVRPGTEATISIREDEVHRLGSPYGHCTAGGEGVEVELLHNTSYTRQACLVSCFQQLMVETCSCGYYLHPLPAGAEYCSSARHPAWGHCFYRLYQDLETHRLPCTSRCPRPCRESAFKLSTGTSRWPSAKSAGWTLATLGEQGLPHQSHRQRSSLAKINIVYQELNYRSVEEAPVYSVPQLLSAMGSLCSLWFGASVLSLLELLELLLDASALTLVLGGRRLRRAWFSWPRASPASGASSIKPEASQMPPPAGGTSDDPEPSGPHLPRVMLPGVLAGVSAEESWAGPQPLETLDT.

The Cytoplasmic portion of the chain corresponds to 1–250; sequence MRAVLSQKTT…CSRGNRLKTT (250 aa). The disordered stretch occupies residues 145–211; that stretch reads KQPHGGALTS…PPPPKEGHQE (67 aa). The segment covering 166–176 has biased composition (basic residues); the sequence is CHLKGWQHRPT. The segment covering 192–205 has biased composition (pro residues); it reads PPRPGPPSAPPPPP. The chain crosses the membrane as a helical span at residues 251–271; sequence SWGLLSLGALVALCWQLGLLF. Topologically, residues 272 to 694 are extracellular; sequence ERHWHRPVLM…VPQLLSAMGS (423 aa). Asn330 and Asn548 each carry an N-linked (GlcNAc...) asparagine glycan. The helical transmembrane segment at 695 to 715 threads the bilayer; sequence LCSLWFGASVLSLLELLELLL. The Cytoplasmic segment spans residues 716 to 802; it reads DASALTLVLG…GPQPLETLDT (87 aa). The interval 738 to 777 is disordered; the sequence is RASPASGASSIKPEASQMPPPAGGTSDDPEPSGPHLPRVM.

The protein belongs to the amiloride-sensitive sodium channel (TC 1.A.6) family. SCNN1D subfamily. As to quaternary structure, can form an alternative heterotrimeric epithelial sodium channel (ENaC), composed of a delta (SCNN1D), beta (SCNN1B), and gamma (SCNN1G) subunit, where the delta (SCNN1D) subunit replaces the alpha (SCNN1A) subunit. In terms of tissue distribution, not specifically expressed in epithelial cells.

The protein resides in the apical cell membrane. It carries out the reaction Na(+)(in) = Na(+)(out). With respect to regulation, originally identified and characterized by its inhibition by the diuretic drug amiloride. In terms of biological role, potential alternative pore-forming subunit of the epithelial sodium channel (ENaC), capable of replacing the alpha/SCNN1A subunit, creating a more active channel with distinct properties. ENaC functions in epithelial tissues, where it facilitates the electrodiffusion of sodium ions from the extracellular fluid through the apical membrane of cells, with water following osmotically, regulating sodium balance and fluid homeostasis. This subunit could also function independently as a sodium channel or assemble into other tissue-specific heterotrimeric sodium channels. Functionally, ENaC channels including this isoform exhibit greater conductance. The polypeptide is Epithelial sodium channel subunit delta (Homo sapiens (Human)).